The sequence spans 56 residues: Large ribosomal subunit protein bL33 (56 aa).

Residues 1 to 12 (MATKGGRDKIKL) show a composition bias toward basic and acidic residues. Positions 1 to 24 (MATKGGRDKIKLESTAGTGHFYTT) are disordered. The span at 15–24 (TAGTGHFYTT) shows a compositional bias: polar residues.

Belongs to the bacterial ribosomal protein bL33 family.

In Paracidovorax citrulli (strain AAC00-1) (Acidovorax citrulli), this protein is Large ribosomal subunit protein bL33.